A 422-amino-acid chain; its full sequence is Phagosome assembly factor 1 (422 aa).

It belongs to the PHAF1 family. Interacts with BCAS3; the interaction is requrired for the association with the phagophore.

It localises to the cytoplasm. It is found in the preautophagosomal structure. Its function is as follows. Plays a regulatory role in autophagic activity. In complex with BCAS3, associates with the autophagosome formation site during both non-selective and selective autophagy. This is Phagosome assembly factor 1 from Homo sapiens (Human).